Consider the following 178-residue polypeptide: ATP synthase subunit d, mitochondrial (178 aa).

A disordered region spans residues 149–178; it reads NKPTFWPHTPEEQVGYKSKEQLEAEAQGHH. The segment covering 165–178 has biased composition (basic and acidic residues); it reads KSKEQLEAEAQGHH.

The protein belongs to the ATPase d subunit family. As to quaternary structure, F-type ATPases have 2 components, CF(1) - the catalytic core - and CF(0) - the membrane proton channel. CF(0) seems to have nine subunits: a, b, c, d, e, f, g, F6 and 8 (or A6L).

Its subcellular location is the mitochondrion. The protein localises to the mitochondrion inner membrane. Mitochondrial membrane ATP synthase (F(1)F(0) ATP synthase or Complex V) produces ATP from ADP in the presence of a proton gradient across the membrane which is generated by electron transport complexes of the respiratory chain. F-type ATPases consist of two structural domains, F(1) - containing the extramembraneous catalytic core, and F(0) - containing the membrane proton channel, linked together by a central stalk and a peripheral stalk. During catalysis, ATP synthesis in the catalytic domain of F(1) is coupled via a rotary mechanism of the central stalk subunits to proton translocation. Part of the complex F(0) domain and the peripheric stalk, which acts as a stator to hold the catalytic alpha(3)beta(3) subcomplex and subunit a/ATP6 static relative to the rotary elements. This chain is ATP synthase subunit d, mitochondrial, found in Drosophila melanogaster (Fruit fly).